The following is a 405-amino-acid chain: Argininosuccinate synthase (405 aa).

ATP is bound by residues 10–18 (AYSGGLDTS) and Ala-37. Residues Tyr-88 and Ser-93 each coordinate L-citrulline. Gly-118 contributes to the ATP binding site. L-aspartate-binding residues include Thr-120, Asn-124, and Asp-125. Residue Asn-124 participates in L-citrulline binding. Residues Arg-128, Ser-179, Ser-188, Glu-264, and Tyr-276 each contribute to the L-citrulline site.

This sequence belongs to the argininosuccinate synthase family. Type 1 subfamily. As to quaternary structure, homotetramer.

It is found in the cytoplasm. The enzyme catalyses L-citrulline + L-aspartate + ATP = 2-(N(omega)-L-arginino)succinate + AMP + diphosphate + H(+). Its pathway is amino-acid biosynthesis; L-arginine biosynthesis; L-arginine from L-ornithine and carbamoyl phosphate: step 2/3. The protein is Argininosuccinate synthase of Pseudomonas savastanoi pv. phaseolicola (strain 1448A / Race 6) (Pseudomonas syringae pv. phaseolicola (strain 1448A / Race 6)).